Here is a 352-residue protein sequence, read N- to C-terminus: RNA 3'-terminal phosphate cyclase (352 aa).

ATP-binding positions include Q102 and 292–296; that span reads HMGDQ. H318 serves as the catalytic Tele-AMP-histidine intermediate.

The protein belongs to the RNA 3'-terminal cyclase family. Type 1 subfamily.

Its subcellular location is the cytoplasm. The enzyme catalyses a 3'-end 3'-phospho-ribonucleotide-RNA + ATP = a 3'-end 2',3'-cyclophospho-ribonucleotide-RNA + AMP + diphosphate. Catalyzes the conversion of 3'-phosphate to a 2',3'-cyclic phosphodiester at the end of RNA. The mechanism of action of the enzyme occurs in 3 steps: (A) adenylation of the enzyme by ATP; (B) transfer of adenylate to an RNA-N3'P to produce RNA-N3'PP5'A; (C) and attack of the adjacent 2'-hydroxyl on the 3'-phosphorus in the diester linkage to produce the cyclic end product. The biological role of this enzyme is unknown but it is likely to function in some aspects of cellular RNA processing. The polypeptide is RNA 3'-terminal phosphate cyclase (Methanopyrus kandleri (strain AV19 / DSM 6324 / JCM 9639 / NBRC 100938)).